A 240-amino-acid polypeptide reads, in one-letter code: Biosynthetic peptidoglycan transglycosylase (240 aa).

The chain crosses the membrane as a helical span at residues 15 to 35; that stretch reads WMFYLGAVVAIAWLATQAFYF.

This sequence belongs to the glycosyltransferase 51 family.

It is found in the cell inner membrane. The catalysed reaction is [GlcNAc-(1-&gt;4)-Mur2Ac(oyl-L-Ala-gamma-D-Glu-L-Lys-D-Ala-D-Ala)](n)-di-trans,octa-cis-undecaprenyl diphosphate + beta-D-GlcNAc-(1-&gt;4)-Mur2Ac(oyl-L-Ala-gamma-D-Glu-L-Lys-D-Ala-D-Ala)-di-trans,octa-cis-undecaprenyl diphosphate = [GlcNAc-(1-&gt;4)-Mur2Ac(oyl-L-Ala-gamma-D-Glu-L-Lys-D-Ala-D-Ala)](n+1)-di-trans,octa-cis-undecaprenyl diphosphate + di-trans,octa-cis-undecaprenyl diphosphate + H(+). It functions in the pathway cell wall biogenesis; peptidoglycan biosynthesis. Its function is as follows. Peptidoglycan polymerase that catalyzes glycan chain elongation from lipid-linked precursors. The chain is Biosynthetic peptidoglycan transglycosylase from Paraburkholderia xenovorans (strain LB400).